The chain runs to 213 residues: CASP-like protein UU2 (213 aa).

Residues 1–26 form a disordered region; that stretch reads MEDPKGAWQSDVFDNGRDFKPHDKAP. Residues 1-53 lie on the Cytoplasmic side of the membrane; it reads MEDPKGAWQSDVFDNGRDFKPHDKAPANVTAGTTPPMYNVGAGGSEGNSKALS. Over residues 14–25 the composition is skewed to basic and acidic residues; that stretch reads DNGRDFKPHDKA. The chain crosses the membrane as a helical span at residues 54–74; the sequence is IISIVLRCLSIMFNVVSLGVI. Residues 75 to 96 lie on the Extracellular side of the membrane; that stretch reads ASNQGKSYFVVWRTLNSSNMQY. N-linked (GlcNAc...) asparagine glycosylation occurs at Asn-90. Residues 97 to 117 form a helical membrane-spanning segment; it reads LFAINVIVLVYCVVQLILSII. Residues 118–137 are Cytoplasmic-facing; that stretch reads NLVQGKMVLSGPTQPASTIT. The chain crosses the membrane as a helical span at residues 138–158; it reads YICDQGLTYMLMAGFGAGVAL. The Extracellular portion of the chain corresponds to 159–184; that stretch reads QASVDKGESGMLDCSGANEFCGKNKA. A helical transmembrane segment spans residues 185–205; it reads SAALSFLGFVCIALSANLNYL. Topologically, residues 206 to 213 are cytoplasmic; that stretch reads RLYFMAAK.

Belongs to the Casparian strip membrane proteins (CASP) family. As to quaternary structure, homodimer and heterodimers.

The protein resides in the cell membrane. The polypeptide is CASP-like protein UU2 (Physcomitrium patens (Spreading-leaved earth moss)).